Reading from the N-terminus, the 453-residue chain is Trypanin (453 aa).

The segment covering 1–10 has biased composition (basic and acidic residues); that stretch reads MPPRTAAERG. The tract at residues 1–22 is disordered; it reads MPPRTAAERGGRRKSVKAPPPV. Coiled coils occupy residues 60 to 156 and 185 to 377; these read TITK…EMNV and SCEA…LVEE.

The protein belongs to the DRC4 family.

Its subcellular location is the cytoplasm. The protein resides in the cytoskeleton. It is found in the cell projection. It localises to the cilium. The protein localises to the flagellum. In terms of biological role, cytoskeletal linker that plays a central role in the flagellum cell motility. Required for directional cell motility. Plays a role as part of a dynein regulatory system that regulates flagellar beat in response to signals from the central pair apparatus and radial spokes in procyclic cells. Also plays an essential role in the bloodstream form of the trypanosomes as its silencing is lethal for the circulating form. In Trypanosoma brucei rhodesiense, this protein is Trypanin.